A 311-amino-acid polypeptide reads, in one-letter code: Tyrosine recombinase XerD (311 aa).

The 94-residue stretch at lysine 2–alanine 95 folds into the Core-binding (CB) domain. The Tyr recombinase domain maps to arginine 116 to alanine 304. Catalysis depends on residues arginine 160, lysine 184, histidine 256, arginine 259, and histidine 282. Tyrosine 291 acts as the O-(3'-phospho-DNA)-tyrosine intermediate in catalysis.

This sequence belongs to the 'phage' integrase family. XerD subfamily. Forms a cyclic heterotetrameric complex composed of two molecules of XerC and two molecules of XerD.

The protein resides in the cytoplasm. Site-specific tyrosine recombinase, which acts by catalyzing the cutting and rejoining of the recombining DNA molecules. The XerC-XerD complex is essential to convert dimers of the bacterial chromosome into monomers to permit their segregation at cell division. It also contributes to the segregational stability of plasmids. In Mycobacterium tuberculosis (strain CDC 1551 / Oshkosh), this protein is Tyrosine recombinase XerD.